The primary structure comprises 540 residues: Chaperonin GroEL (540 aa).

ATP contacts are provided by residues 30-33 (TLAP), Lys51, 87-91 (DGTTT), Gly415, 479-481 (NAA), and Asp495.

The protein belongs to the chaperonin (HSP60) family. Forms a cylinder of 14 subunits composed of two heptameric rings stacked back-to-back. Interacts with the co-chaperonin GroES.

It localises to the cytoplasm. The catalysed reaction is ATP + H2O + a folded polypeptide = ADP + phosphate + an unfolded polypeptide.. In terms of biological role, together with its co-chaperonin GroES, plays an essential role in assisting protein folding. The GroEL-GroES system forms a nano-cage that allows encapsulation of the non-native substrate proteins and provides a physical environment optimized to promote and accelerate protein folding. This chain is Chaperonin GroEL, found in Methylovorus sp. (strain SS1 / DSM 11726).